The primary structure comprises 338 residues: Fructose-1,6-bisphosphatase class 1 (338 aa).

Positions 94, 116, 118, and 119 each coordinate Mg(2+). Residues 119 to 122, N210, and K276 contribute to the substrate site; that span reads DGSS. Residue E282 participates in Mg(2+) binding.

The protein belongs to the FBPase class 1 family. In terms of assembly, homotetramer. Mg(2+) is required as a cofactor.

It is found in the cytoplasm. It catalyses the reaction beta-D-fructose 1,6-bisphosphate + H2O = beta-D-fructose 6-phosphate + phosphate. Its pathway is carbohydrate biosynthesis; gluconeogenesis. The sequence is that of Fructose-1,6-bisphosphatase class 1 from Burkholderia mallei (strain NCTC 10247).